Consider the following 206-residue polypeptide: Small ribosomal subunit protein uS4 (206 aa).

The region spanning 94 to 157 (RRLDNVVYRL…RSRTYFKNLV (64 aa)) is the S4 RNA-binding domain.

It belongs to the universal ribosomal protein uS4 family. Part of the 30S ribosomal subunit. Contacts protein S5. The interaction surface between S4 and S5 is involved in control of translational fidelity.

In terms of biological role, one of the primary rRNA binding proteins, it binds directly to 16S rRNA where it nucleates assembly of the body of the 30S subunit. Its function is as follows. With S5 and S12 plays an important role in translational accuracy. The protein is Small ribosomal subunit protein uS4 of Chloroflexus aurantiacus (strain ATCC 29364 / DSM 637 / Y-400-fl).